Here is a 95-residue protein sequence, read N- to C-terminus: Co-chaperonin GroES (95 aa).

It belongs to the GroES chaperonin family. In terms of assembly, heptamer of 7 subunits arranged in a ring. Interacts with the chaperonin GroEL.

It is found in the cytoplasm. Together with the chaperonin GroEL, plays an essential role in assisting protein folding. The GroEL-GroES system forms a nano-cage that allows encapsulation of the non-native substrate proteins and provides a physical environment optimized to promote and accelerate protein folding. GroES binds to the apical surface of the GroEL ring, thereby capping the opening of the GroEL channel. This chain is Co-chaperonin GroES, found in Chlorobaculum parvum (strain DSM 263 / NCIMB 8327) (Chlorobium vibrioforme subsp. thiosulfatophilum).